A 255-amino-acid chain; its full sequence is MKEAGILFEELVSIMEKLRSPEGCEWDRKQTHESLKPYLIEECYELIEAIDEKNDDMMKEELGDVLLQVVFHAQIARERGAFTIEDVIRTLNEKLIRRHPHVFGDSPGYSYKQWEDIKAQEKGKKKSSRIGEINPLVPALSMARRIQENASQVGFDWKDPEGVYEKIEEELKELKEAKDPRELEEEFGDLLFSIVNLSRFLNVDPESALRKATRKFVERFKKMEELIEKDGLVLEELPIEKLDEYWEKAKGGDET.

Residues 162 to 166, Glu-169, and 182 to 185 each bind ATP; these read GVYEK and ELEE. A Mg(2+)-binding site is contributed by Glu-169. Mg(2+) contacts are provided by Glu-186 and Asp-189. ATP is bound by residues Asp-189, 215–219, and Trp-246; that span reads KFVER.

Homodimer. Mg(2+) serves as cofactor.

The catalysed reaction is diphosphate + H2O = 2 phosphate + H(+). It catalyses the reaction a ribonucleoside 5'-triphosphate + H2O = a ribonucleoside 5'-phosphate + diphosphate + H(+). It carries out the reaction a 2'-deoxyribonucleoside 5'-triphosphate + H2O = a 2'-deoxyribonucleoside 5'-phosphate + diphosphate + H(+). Inhibited by AMPCPP (alpha,beta-methyleneadenosine triphosphate). In terms of biological role, catalyzes the hydrolysis of all eight canonical ribonucleoside triphosphates (NTP) and deoxyribonucleoside triphosphates (dNTP) to their corresponding nucleoside monophosphates ((d)NMP) and PPi and subsequently hydrolyzes the resultant PPi to Pi. The NTPase activity with deoxyribonucleoside triphosphates as substrate is higher than corresponding ribonucleoside triphosphates. dGTP is the best substrate among the deoxyribonucleoside triphosphates, and GTP is the best among the ribonucleoside triphosphates. The protein is Nucleoside triphosphate pyrophosphohydrolase/pyrophosphatase MazG (mazG) of Thermotoga maritima (strain ATCC 43589 / DSM 3109 / JCM 10099 / NBRC 100826 / MSB8).